We begin with the raw amino-acid sequence, 474 residues long: tRNA-2-methylthio-N(6)-dimethylallyladenosine synthase (474 aa).

Residues 3–120 enclose the MTTase N-terminal domain; that stretch reads KKLHIKTWGC…LPEMINHVNG (118 aa). 6 residues coordinate [4Fe-4S] cluster: Cys-12, Cys-49, Cys-83, Cys-157, Cys-161, and Cys-164. The region spanning 143–375 is the Radical SAM core domain; that stretch reads RAEGPTAFVS…QERITQQAMQ (233 aa). The TRAM domain occupies 378–441; it reads RRMKGKVQRI…PNSLRGVLLR (64 aa).

This sequence belongs to the methylthiotransferase family. MiaB subfamily. Monomer. Requires [4Fe-4S] cluster as cofactor.

The protein resides in the cytoplasm. It carries out the reaction N(6)-dimethylallyladenosine(37) in tRNA + (sulfur carrier)-SH + AH2 + 2 S-adenosyl-L-methionine = 2-methylsulfanyl-N(6)-dimethylallyladenosine(37) in tRNA + (sulfur carrier)-H + 5'-deoxyadenosine + L-methionine + A + S-adenosyl-L-homocysteine + 2 H(+). Catalyzes the methylthiolation of N6-(dimethylallyl)adenosine (i(6)A), leading to the formation of 2-methylthio-N6-(dimethylallyl)adenosine (ms(2)i(6)A) at position 37 in tRNAs that read codons beginning with uridine. This is tRNA-2-methylthio-N(6)-dimethylallyladenosine synthase from Sodalis glossinidius (strain morsitans).